The following is a 1510-amino-acid chain: Chromosome partition protein MukB (1510 aa).

The stretch at glutamate 6–aspartate 30 forms a coiled coil. Residue glycine 75–serine 82 coordinates ATP. 7 coiled-coil regions span residues glutamine 346–serine 506, glutamine 553–serine 611, methionine 673–glutamine 706, serine 821–alanine 846, glutamate 876–glutamine 1064, glutamate 1094–valine 1149, and aspartate 1249–isoleucine 1304. The segment at proline 707–arginine 824 is flexible hinge.

It belongs to the SMC family. MukB subfamily. As to quaternary structure, homodimerization via its hinge domain. Binds to DNA via its C-terminal region. Interacts, and probably forms a ternary complex, with MukE and MukF via its C-terminal region. The complex formation is stimulated by calcium or magnesium. Interacts with tubulin-related protein FtsZ.

The protein localises to the cytoplasm. It is found in the nucleoid. In terms of biological role, plays a central role in chromosome condensation, segregation and cell cycle progression. Functions as a homodimer, which is essential for chromosome partition. Involved in negative DNA supercoiling in vivo, and by this means organize and compact chromosomes. May achieve or facilitate chromosome segregation by condensation DNA from both sides of a centrally located replisome during cell division. The sequence is that of Chromosome partition protein MukB from Haemophilus influenzae (strain PittGG).